The following is a 370-amino-acid chain: Probable G-protein coupled receptor 85 (370 aa).

The Extracellular portion of the chain corresponds to 1 to 25 (MANYSHAADNILQNLSPLTAFLKLT). A glycan (N-linked (GlcNAc...) asparagine) is linked at Asn-3. A helical transmembrane segment spans residues 26-46 (SLGFIIGVSVVGNLLISILLV). Residues 47-57 (KDKTLHRAPYY) are Cytoplasmic-facing. A helical transmembrane segment spans residues 58–78 (FLLDLCCSDILRSAICFPFVF). Residues 79–96 (NSVKNGSTWTYGTLTCKV) are Extracellular-facing. The N-linked (GlcNAc...) asparagine glycan is linked to Asn-83. Cys-94 and Cys-172 are joined by a disulfide. The chain crosses the membrane as a helical span at residues 97-117 (IAFLGVLSCFHTAFMLFCISV). Over 118–137 (TRYLAIAHHRFYTKRLTFWT) the chain is Cytoplasmic. Residues 138–158 (CLAVICMVWTLSVAMAFPPVL) traverse the membrane as a helical segment. Residues 159–188 (DVGTYSFIREEDQCTFQHRSFRANDSLGFM) lie on the Extracellular side of the membrane. Residue Asn-182 is glycosylated (N-linked (GlcNAc...) asparagine). The chain crosses the membrane as a helical span at residues 189 to 209 (LLLALILLATQLVYLKLIFFV). Residues 210-286 (HDRRKMKPVQ…FKMEKRISRM (77 aa)) lie on the Cytoplasmic side of the membrane. Residues 287–307 (FYIMTFLFLTLWGPYLVACYW) traverse the membrane as a helical segment. The Extracellular portion of the chain corresponds to 308–313 (RVFARG). Residues 314–334 (PVVPGGFLTAAVWMSFAQAGI) form a helical membrane-spanning segment. The Cytoplasmic portion of the chain corresponds to 335–370 (NPFVCIFSNRELRRCFSTTLLYCRKSRLPREPYCVI).

It belongs to the G-protein coupled receptor 1 family. In terms of assembly, interacts with DLG4 and DLG3. In terms of tissue distribution, highly expressed in brain and testis. Lower levels in small intestine, placenta and spleen. In brain regions, detected in all regions tested, but somewhat lower levels in the corpus callosum, medulla and spinal cord.

The protein resides in the cell membrane. It is found in the endoplasmic reticulum. Functionally, orphan receptor. The chain is Probable G-protein coupled receptor 85 (GPR85) from Homo sapiens (Human).